A 132-amino-acid chain; its full sequence is Mercuric resistance operon regulatory protein (132 aa).

The region spanning 2–71 (KFRIGELADK…LNEIDKLLGV (70 aa)) is the HTH merR-type domain. A DNA-binding region (H-T-H motif) is located at residues 5 to 24 (IGELADKCGVNKETIRYYER). Residues cysteine 79, cysteine 114, and cysteine 123 each contribute to the Hg(2+) site.

As to quaternary structure, homodimer.

Mediates the mercuric-dependent induction of mercury resistance operon. In the absence of mercury MerR represses transcription by binding tightly to the mer operator region; when mercury is present the dimeric complex binds a single ion and becomes a potent transcriptional activator, while remaining bound to the mer site. The sequence is that of Mercuric resistance operon regulatory protein (merR1) from Bacillus cereus.